The sequence spans 195 residues: GTP cyclohydrolase 1 (195 aa).

Residues Cys-86, His-89, and Cys-158 each contribute to the Zn(2+) site.

It belongs to the GTP cyclohydrolase I family. Homomer.

It catalyses the reaction GTP + H2O = 7,8-dihydroneopterin 3'-triphosphate + formate + H(+). Its pathway is cofactor biosynthesis; 7,8-dihydroneopterin triphosphate biosynthesis; 7,8-dihydroneopterin triphosphate from GTP: step 1/1. In Ruminiclostridium cellulolyticum (strain ATCC 35319 / DSM 5812 / JCM 6584 / H10) (Clostridium cellulolyticum), this protein is GTP cyclohydrolase 1.